We begin with the raw amino-acid sequence, 397 residues long: Acetyl-CoA acetyltransferase, cytosolic (397 aa).

M1 carries the post-translational modification N-acetylmethionine. The Acyl-thioester intermediate role is filled by C92. K200 is subject to N6-acetyllysine. The CoA site is built by R223 and S226. K233 and K235 each carry N6-acetyllysine. S252 provides a ligand contact to CoA. The active-site Proton donor/acceptor is the C383.

This sequence belongs to the thiolase-like superfamily. Thiolase family. In terms of assembly, homotetramer.

It is found in the cytoplasm. The protein localises to the cytosol. It catalyses the reaction 2 acetyl-CoA = acetoacetyl-CoA + CoA. The protein operates within lipid metabolism; fatty acid metabolism. Involved in the biosynthetic pathway of cholesterol. This is Acetyl-CoA acetyltransferase, cytosolic (Acat2) from Rattus norvegicus (Rat).